Reading from the N-terminus, the 1270-residue chain is Myosin-binding protein C, cardiac-type (1270 aa).

Methionine 1 bears the N-acetylmethionine mark. Residues 1–24 (MPEPGKKPVSAFNKKPRSAEVTAG) form a disordered region. Serine 47 and serine 72 each carry phosphoserine. The span at 94–105 (VTEPAPPEKAES) shows a compositional bias: basic and acidic residues. Residues 94-152 (VTEPAPPEKAESEVAPGAPEEVPAPATELEESVSSPEGSVSVTQDGSAAEHQGAPDDPI) are disordered. Positions 106–135 (EVAPGAPEEVPAPATELEESVSSPEGSVSV) are enriched in low complexity. In terms of domain architecture, Ig-like C2-type 1 spans 151–254 (PIGLFLMRPQ…FDSCNFNLTV (104 aa)). The Zn(2+) site is built by glutamine 206, histidine 208, glutamate 221, and histidine 223. Phosphoserine; by PKA and PKC is present on residues serine 273, serine 282, and serine 302. Serine 307 and serine 423 each carry phosphoserine. 4 Ig-like C2-type domains span residues 358–448 (STAF…VKEP), 449–539 (PVLI…VQEK), 540–629 (KLEV…HFME), and 641–767 (PKIH…VIDV). Cysteine 432 and cysteine 439 are disulfide-bonded. 2 positions are modified to phosphoserine: serine 455 and serine 546. Threonine 603 carries the phosphothreonine modification. The interval 683 to 702 (VTQGKKASAGPHPDAPEDAG) is disordered. Fibronectin type-III domains lie at 770–866 (APAA…IGPP) and 868–963 (EPTH…VQEI). The region spanning 967–1061 (PRLQLPRHLR…ATLILQIVDK (95 aa)) is the Ig-like C2-type 6 domain. Positions 1064–1159 (PPQDIRIVET…TKEPVFIPRP (96 aa)) constitute a Fibronectin type-III 3 domain. Residues 1177-1270 (PSFTQPLANR…ECRLEVRVPQ (94 aa)) form the Ig-like C2-type 7 domain. Arginine 1237 carries the post-translational modification Omega-N-methylarginine.

It belongs to the immunoglobulin superfamily. MyBP family. In terms of processing, substrate for phosphorylation by PKA and PKC. Reversible phosphorylation appears to modulate contraction. Post-translationally, polyubiquitinated.

In terms of biological role, thick filament-associated protein located in the crossbridge region of vertebrate striated muscle a bands. In vitro it binds MHC, F-actin and native thin filaments, and modifies the activity of actin-activated myosin ATPase. It may modulate muscle contraction or may play a more structural role. The protein is Myosin-binding protein C, cardiac-type (Mybpc3) of Mus musculus (Mouse).